The sequence spans 354 residues: uncharacterized protein (354 aa).

A helical membrane pass occupies residues leucine 43–valine 63.

It is found in the cell membrane. This is an uncharacterized protein from Bacillus subtilis (strain 168).